Consider the following 153-residue polypeptide: MAKITGNLVATGLKFGIVTARFNDFINDKLLSGAIDTLVRHGAYENDIDTAWVPGAFEIPLVAKKMATSGKYDAVICLGTVISGSTTHYDYVCNEAAKGIGAVALETGVPVIFGVLTTENIEQAIERAGTKAGNKGSECALGAIEIVNVLKAI.

5-amino-6-(D-ribitylamino)uracil contacts are provided by residues phenylalanine 22, 56-58, and 80-82; these read AFE and TVI. 85-86 lines the (2S)-2-hydroxy-3-oxobutyl phosphate pocket; the sequence is ST. The Proton donor role is filled by histidine 88. A 5-amino-6-(D-ribitylamino)uracil-binding site is contributed by phenylalanine 113. (2S)-2-hydroxy-3-oxobutyl phosphate is bound at residue arginine 127.

Belongs to the DMRL synthase family. Forms an icosahedral capsid composed of 60 subunits, arranged as a dodecamer of pentamers.

The catalysed reaction is (2S)-2-hydroxy-3-oxobutyl phosphate + 5-amino-6-(D-ribitylamino)uracil = 6,7-dimethyl-8-(1-D-ribityl)lumazine + phosphate + 2 H2O + H(+). It functions in the pathway cofactor biosynthesis; riboflavin biosynthesis; riboflavin from 2-hydroxy-3-oxobutyl phosphate and 5-amino-6-(D-ribitylamino)uracil: step 1/2. Catalyzes the formation of 6,7-dimethyl-8-ribityllumazine by condensation of 5-amino-6-(D-ribitylamino)uracil with 3,4-dihydroxy-2-butanone 4-phosphate. This is the penultimate step in the biosynthesis of riboflavin. This Actinobacillus pleuropneumoniae serotype 5b (strain L20) protein is 6,7-dimethyl-8-ribityllumazine synthase.